The following is a 406-amino-acid chain: Odorant receptor 42a (406 aa).

Residues 1-44 (MDLRRWFPTLYTQSKDSPVRSRDATLYLLRCVFLMGVRKPPAKF) are Cytoplasmic-facing. Residues 45-65 (FVAYVLWSFALNFCSTFYQPI) traverse the membrane as a helical segment. Topologically, residues 66-86 (GFLTGYISHLSEFSPGEFLTS) are extracellular. A helical membrane pass occupies residues 87–107 (LQVAFNAWSCSTKVLIVWALV). Residues 108 to 142 (KRFDEANNLLDEMDRRITDPGERLQIHRAVSLSNR) are Cytoplasmic-facing. The helical transmembrane segment at 143-163 (IFFFFMAVYMVYATNTFLSAI) threads the bilayer. Topologically, residues 164-181 (FIGRPPYQNYYPFLDWRS) are extracellular. The chain crosses the membrane as a helical span at residues 182 to 202 (STLHLALQAGLEYFAMAGACF). Topologically, residues 203–271 (QDVCVDCYPV…DCLRPVISGT (69 aa)) are cytoplasmic. The chain crosses the membrane as a helical span at residues 272 to 292 (IFVQFLVVGLVLGFTLINIVL). Residues 293 to 298 (FANLGS) lie on the Extracellular side of the membrane. The chain crosses the membrane as a helical span at residues 299-319 (AIAALSFMAAVLLETTPFCIL). Residues 320–359 (CNYLTEDCYKLADALFQSNWIDEEKRYQKTLMYFLQKLQQ) lie on the Cytoplasmic side of the membrane. Residues 360–380 (PITFMAMNVFPISVGTNISVT) traverse the membrane as a helical segment. Over 381-406 (KFSFSVFTLVKQMNISEKLAKSEMEE) the chain is Extracellular. The N-linked (GlcNAc...) asparagine glycan is linked to N394.

Belongs to the insect chemoreceptor superfamily. Heteromeric odorant receptor channel (TC 1.A.69) family. Or2a subfamily. As to quaternary structure, interacts with Orco. Complexes exist early in the endomembrane system in olfactory sensory neurons (OSNs), coupling these complexes to the conserved ciliary trafficking pathway.

It is found in the cell membrane. Its function is as follows. Odorant receptor which mediates acceptance or avoidance behavior, depending on its substrates. The odorant receptor repertoire encodes a large collection of odor stimuli that vary widely in identity, intensity, and duration. May form a complex with Orco to form odorant-sensing units, providing sensitive and prolonged odorant signaling and calcium permeability. Involved in the behavioral responses to butanol, ethyl acetate, propyl acetate, and pentyl acetate. Also responds to pyrazines. This chain is Odorant receptor 42a (Or42a), found in Drosophila melanogaster (Fruit fly).